Consider the following 206-residue polypeptide: Large ribosomal subunit protein uL4 (206 aa).

The protein belongs to the universal ribosomal protein uL4 family. In terms of assembly, part of the 50S ribosomal subunit.

Its function is as follows. One of the primary rRNA binding proteins, this protein initially binds near the 5'-end of the 23S rRNA. It is important during the early stages of 50S assembly. It makes multiple contacts with different domains of the 23S rRNA in the assembled 50S subunit and ribosome. Forms part of the polypeptide exit tunnel. This chain is Large ribosomal subunit protein uL4, found in Methylorubrum populi (strain ATCC BAA-705 / NCIMB 13946 / BJ001) (Methylobacterium populi).